The following is a 143-amino-acid chain: Large ribosomal subunit protein uL11 (143 aa).

This sequence belongs to the universal ribosomal protein uL11 family. As to quaternary structure, part of the ribosomal stalk of the 50S ribosomal subunit. Interacts with L10 and the large rRNA to form the base of the stalk. L10 forms an elongated spine to which L12 dimers bind in a sequential fashion forming a multimeric L10(L12)X complex. In terms of processing, one or more lysine residues are methylated.

In terms of biological role, forms part of the ribosomal stalk which helps the ribosome interact with GTP-bound translation factors. This chain is Large ribosomal subunit protein uL11, found in Rhizobium etli (strain ATCC 51251 / DSM 11541 / JCM 21823 / NBRC 15573 / CFN 42).